We begin with the raw amino-acid sequence, 357 residues long: MGDHNLPDFQTCLKFSVTAKKSFLCMYRDSVSKEKLASSMPSTCDIQLKRAINDAYPGGGIKVTVLNSTTASLDSLATTHVKEFEIVIIPDINSLLQPDQAKLVKIMRDCTVAIEKAQSTRIFIGVVHWNNPVQPSGAAKDGDEAGKPAPKTRIFLPTSLRMGAWLKHKFWFACAPPYLDFESSTESSINTRANNSIGMAEEEKQEPESKRSIILNEEANLNDVFVGSTVRRYILDIMVHLRTHRLTYNAKAGGVYTNSLDDVVLLSRLIGLHSGKMFVSPSHVKEASRWYFPMHLELVQRSSMDSSLLYGSDPNLVDEMLEKLAKIKCEEVNEFENPLFLESLVVKNVLSKVVPPV.

The protein belongs to the MTC2 family.

Functionally, may be involved in telomere capping. This Saccharomyces cerevisiae (strain JAY291) (Baker's yeast) protein is Maintenance of telomere capping protein 2 (MTC2).